The sequence spans 404 residues: Glucose-1-phosphate adenylyltransferase (404 aa).

Alpha-D-glucose 1-phosphate is bound by residues Y99, G164, 179–180 (EK), and S197.

The protein belongs to the bacterial/plant glucose-1-phosphate adenylyltransferase family. As to quaternary structure, homotetramer.

The enzyme catalyses alpha-D-glucose 1-phosphate + ATP + H(+) = ADP-alpha-D-glucose + diphosphate. Its pathway is glycan biosynthesis; glycogen biosynthesis. Functionally, involved in the biosynthesis of ADP-glucose, a building block required for the elongation reactions to produce glycogen. Catalyzes the reaction between ATP and alpha-D-glucose 1-phosphate (G1P) to produce pyrophosphate and ADP-Glc. The protein is Glucose-1-phosphate adenylyltransferase of Rhodococcus opacus (strain B4).